Reading from the N-terminus, the 184-residue chain is Oligoribonuclease (184 aa).

The Exonuclease domain occupies 8-171 (LIWIDLEMTG…EDIRESVVEL (164 aa)). Tyrosine 129 is a catalytic residue.

It belongs to the oligoribonuclease family.

It localises to the cytoplasm. 3'-to-5' exoribonuclease specific for small oligoribonucleotides. The polypeptide is Oligoribonuclease (Buchnera aphidicola subsp. Acyrthosiphon pisum (strain APS) (Acyrthosiphon pisum symbiotic bacterium)).